We begin with the raw amino-acid sequence, 757 residues long: Polyribonucleotide nucleotidyltransferase (757 aa).

2 residues coordinate Mg(2+): aspartate 525 and aspartate 531. One can recognise a KH domain in the interval 591 to 650 (PRVISVNIPVDKIGELIGPKGKTINAIQDETGADISIEEDGTVYIGAVDGPSADAARAQV). In terms of domain architecture, S1 motif spans 662-734 (GESFLGTVVK…DRGKLSLAPV (73 aa)). Residues 737–757 (ETADQEGRDAASHGSEAPAEG) are disordered.

Belongs to the polyribonucleotide nucleotidyltransferase family. Mg(2+) serves as cofactor.

Its subcellular location is the cytoplasm. The enzyme catalyses RNA(n+1) + phosphate = RNA(n) + a ribonucleoside 5'-diphosphate. Involved in mRNA degradation. Catalyzes the phosphorolysis of single-stranded polyribonucleotides processively in the 3'- to 5'-direction. This Clavibacter michiganensis subsp. michiganensis (strain NCPPB 382) protein is Polyribonucleotide nucleotidyltransferase.